Reading from the N-terminus, the 562-residue chain is Glucocorticoid modulatory element-binding protein 1 (562 aa).

Ala2 carries the N-acetylalanine modification. An SAND domain is found at 72 to 156 (ASSIEGNEDM…RKMMDSGQID (85 aa)). Position 103 (Cys103) interacts with Zn(2+). Residues Lys129, Lys133, Lys136, and Arg147 each contribute to the DNA site. Zn(2+) is bound by residues His160, Cys164, and Cys168. Residues 311–355 (LDNRRKQVEQGEEQFLYTLADLERQLEEQKKQAQDPRLKSQTVQN) adopt a coiled-coil conformation. A disordered region spans residues 360 to 384 (PVSTPKPPKRPRLQRPASTTVLSPS). The segment covering 375-384 (PASTTVLSPS) has biased composition (polar residues).

In terms of assembly, homodimer, and heterodimer of GMEB1 and GMEB2. Interacts with TRIM63. Interacts with the glucocorticoid receptor (NR3C1) and NCOA2/TIF2. May interact with HSP27 and CREB-binding protein (CBP). Ubiquitous. Low levels were detected in heart, brain, spleen, lung, liver, skeletal muscle, kidney and testis.

The protein localises to the nucleus. The protein resides in the cytoplasm. Its function is as follows. Trans-acting factor that binds to glucocorticoid modulatory elements (GME) present in the TAT (tyrosine aminotransferase) promoter and increases sensitivity to low concentrations of glucocorticoids. Also binds to the transferrin receptor promoter. This Mus musculus (Mouse) protein is Glucocorticoid modulatory element-binding protein 1 (Gmeb1).